A 580-amino-acid chain; its full sequence is Glutamine--tRNA ligase (580 aa).

The 'HIGH' region motif lies at 41 to 51 (PEPNGYLHIGH). ATP contacts are provided by residues 42-44 (EPN) and 48-54 (HIGHAKA). Positions 74 and 218 each coordinate L-glutamine. Residues Thr237, 285-286 (RL), and 293-295 (MSK) contribute to the ATP site. A 'KMSKS' region motif is present at residues 292 to 296 (VMSKR).

This sequence belongs to the class-I aminoacyl-tRNA synthetase family. Monomer.

Its subcellular location is the cytoplasm. It catalyses the reaction tRNA(Gln) + L-glutamine + ATP = L-glutaminyl-tRNA(Gln) + AMP + diphosphate. The protein is Glutamine--tRNA ligase of Xylella fastidiosa (strain M12).